The primary structure comprises 425 residues: Serine--tRNA ligase (425 aa).

Residue 232-234 participates in L-serine binding; sequence TSE. ATP-binding positions include 263–265 and valine 279; that span reads RRE. Glutamate 286 lines the L-serine pocket. Residue 350-353 participates in ATP binding; that stretch reads EAVS. Threonine 387 contacts L-serine.

Belongs to the class-II aminoacyl-tRNA synthetase family. Type-1 seryl-tRNA synthetase subfamily. In terms of assembly, homodimer. The tRNA molecule binds across the dimer.

It localises to the cytoplasm. It carries out the reaction tRNA(Ser) + L-serine + ATP = L-seryl-tRNA(Ser) + AMP + diphosphate + H(+). The catalysed reaction is tRNA(Sec) + L-serine + ATP = L-seryl-tRNA(Sec) + AMP + diphosphate + H(+). It functions in the pathway aminoacyl-tRNA biosynthesis; selenocysteinyl-tRNA(Sec) biosynthesis; L-seryl-tRNA(Sec) from L-serine and tRNA(Sec): step 1/1. Functionally, catalyzes the attachment of serine to tRNA(Ser). Is also able to aminoacylate tRNA(Sec) with serine, to form the misacylated tRNA L-seryl-tRNA(Sec), which will be further converted into selenocysteinyl-tRNA(Sec). This chain is Serine--tRNA ligase, found in Methanoculleus marisnigri (strain ATCC 35101 / DSM 1498 / JR1).